We begin with the raw amino-acid sequence, 517 residues long: Maturase K (517 aa).

The protein belongs to the intron maturase 2 family. MatK subfamily.

The protein localises to the plastid. Its subcellular location is the chloroplast. Its function is as follows. Usually encoded in the trnK tRNA gene intron. Probably assists in splicing its own and other chloroplast group II introns. This is Maturase K from Juncus effusus (Soft rush).